A 333-amino-acid polypeptide reads, in one-letter code: Ketol-acid reductoisomerase (NADP(+)) (333 aa).

One can recognise a KARI N-terminal Rossmann domain in the interval 2-182; that stretch reads AELFYDADAD…GGTRAGVIKT (181 aa). NADP(+) is bound by residues 25 to 28, serine 51, serine 53, and 83 to 86; these read YGSQ and DPIQ. Histidine 108 is a catalytic residue. Glycine 134 provides a ligand contact to NADP(+). Residues 183-328 form the KARI C-terminal knotted domain; it reads TFTEETETDL…KELRKLMSWV (146 aa). 4 residues coordinate Mg(2+): aspartate 191, glutamate 195, glutamate 227, and glutamate 231. Serine 252 contributes to the substrate binding site.

The protein belongs to the ketol-acid reductoisomerase family. Mg(2+) serves as cofactor.

It carries out the reaction (2R)-2,3-dihydroxy-3-methylbutanoate + NADP(+) = (2S)-2-acetolactate + NADPH + H(+). The enzyme catalyses (2R,3R)-2,3-dihydroxy-3-methylpentanoate + NADP(+) = (S)-2-ethyl-2-hydroxy-3-oxobutanoate + NADPH + H(+). It functions in the pathway amino-acid biosynthesis; L-isoleucine biosynthesis; L-isoleucine from 2-oxobutanoate: step 2/4. The protein operates within amino-acid biosynthesis; L-valine biosynthesis; L-valine from pyruvate: step 2/4. Involved in the biosynthesis of branched-chain amino acids (BCAA). Catalyzes an alkyl-migration followed by a ketol-acid reduction of (S)-2-acetolactate (S2AL) to yield (R)-2,3-dihydroxy-isovalerate. In the isomerase reaction, S2AL is rearranged via a Mg-dependent methyl migration to produce 3-hydroxy-3-methyl-2-ketobutyrate (HMKB). In the reductase reaction, this 2-ketoacid undergoes a metal-dependent reduction by NADPH to yield (R)-2,3-dihydroxy-isovalerate. The protein is Ketol-acid reductoisomerase (NADP(+)) of Streptomyces avermitilis (strain ATCC 31267 / DSM 46492 / JCM 5070 / NBRC 14893 / NCIMB 12804 / NRRL 8165 / MA-4680).